We begin with the raw amino-acid sequence, 399 residues long: LIM/homeobox protein Lhx5 (399 aa).

LIM zinc-binding domains are found at residues 3 to 61 (VHCA…RRFG) and 62 to 125 (TKCA…ASAI). Disordered stretches follow at residues 136-185 (CTDR…GPRT) and 301-399 (PSSQ…NTVW). Positions 151 to 167 (DDTKETDNSTSSDKDTN) are enriched in basic and acidic residues. The segment at residues 180 to 239 (RRGPRTTIKAKQLETLKAAFVATPKPTRHIREQLAQETGLNMRVIQVWFQNRRSKERRMK) is a DNA-binding region (homeobox).

It localises to the nucleus. Its function is as follows. Probably involved in the patterning of the nervous system, in particular in the early specification of the diencephalon. The chain is LIM/homeobox protein Lhx5 (lhx5) from Danio rerio (Zebrafish).